A 197-amino-acid chain; its full sequence is Nucleoid occlusion factor SlmA (197 aa).

The HTH tetR-type domain maps to 7 to 67 (INRREHILQC…GLIDFIEESL (61 aa)). A DNA-binding region (H-T-H motif) is located at residues 30-49 (TTAKLAAEVGVSEAALYRHF).

Belongs to the nucleoid occlusion factor SlmA family. In terms of assembly, homodimer. Interacts with FtsZ.

It localises to the cytoplasm. The protein localises to the nucleoid. Functionally, required for nucleoid occlusion (NO) phenomenon, which prevents Z-ring formation and cell division over the nucleoid. Acts as a DNA-associated cell division inhibitor that binds simultaneously chromosomal DNA and FtsZ, and disrupts the assembly of FtsZ polymers. SlmA-DNA-binding sequences (SBS) are dispersed on non-Ter regions of the chromosome, preventing FtsZ polymerization at these regions. This Shewanella loihica (strain ATCC BAA-1088 / PV-4) protein is Nucleoid occlusion factor SlmA.